Reading from the N-terminus, the 151-residue chain is MNTIKTRFGVIDYDPANLLLFPNGLVGLPHLRNFIVMPNKKEGPLFWIQSVDDPDMAFVLTDPNNFFPDYQIQPGKDEHTTLGISGSDEYFILSVVTVPADQKITLNLAAPIIFTPTNNRAVQVILGGDGYSTKTPLPTVKRHERRSVVNE.

Belongs to the FliW family. As to quaternary structure, interacts with translational regulator CsrA and flagellin(s).

Its subcellular location is the cytoplasm. Its function is as follows. Acts as an anti-CsrA protein, binds CsrA and prevents it from repressing translation of its target genes, one of which is flagellin. Binds to flagellin and participates in the assembly of the flagellum. The chain is Flagellar assembly factor FliW 2 from Desulfotalea psychrophila (strain LSv54 / DSM 12343).